The chain runs to 227 residues: 2,3-bisphosphoglycerate-dependent phosphoglycerate mutase (227 aa).

Substrate is bound by residues 7–14 (RHGFSEWN), 20–21 (TG), R59, 86–89 (ERHY), K97, 113–114 (RR), and 182–183 (GN). The active-site Tele-phosphohistidine intermediate is the H8. E86 (proton donor/acceptor) is an active-site residue.

This sequence belongs to the phosphoglycerate mutase family. BPG-dependent PGAM subfamily. As to quaternary structure, homodimer.

The enzyme catalyses (2R)-2-phosphoglycerate = (2R)-3-phosphoglycerate. It functions in the pathway carbohydrate degradation; glycolysis; pyruvate from D-glyceraldehyde 3-phosphate: step 3/5. Its function is as follows. Catalyzes the interconversion of 2-phosphoglycerate and 3-phosphoglycerate. In Glaesserella parasuis serovar 5 (strain SH0165) (Haemophilus parasuis), this protein is 2,3-bisphosphoglycerate-dependent phosphoglycerate mutase.